A 202-amino-acid polypeptide reads, in one-letter code: Putative 3-methyladenine DNA glycosylase (202 aa).

It belongs to the DNA glycosylase MPG family.

The sequence is that of Putative 3-methyladenine DNA glycosylase from Staphylococcus aureus (strain MRSA252).